The primary structure comprises 311 residues: Aspartate carbamoyltransferase catalytic subunit (311 aa).

Carbamoyl phosphate is bound by residues R52 and T53. K80 is an L-aspartate binding site. R102, H131, and Q134 together coordinate carbamoyl phosphate. 2 residues coordinate L-aspartate: R164 and R216. The carbamoyl phosphate site is built by A259 and P260.

This sequence belongs to the aspartate/ornithine carbamoyltransferase superfamily. ATCase family. Heterododecamer (2C3:3R2) of six catalytic PyrB chains organized as two trimers (C3), and six regulatory PyrI chains organized as three dimers (R2).

The catalysed reaction is carbamoyl phosphate + L-aspartate = N-carbamoyl-L-aspartate + phosphate + H(+). It functions in the pathway pyrimidine metabolism; UMP biosynthesis via de novo pathway; (S)-dihydroorotate from bicarbonate: step 2/3. Catalyzes the condensation of carbamoyl phosphate and aspartate to form carbamoyl aspartate and inorganic phosphate, the committed step in the de novo pyrimidine nucleotide biosynthesis pathway. The protein is Aspartate carbamoyltransferase catalytic subunit of Lactiplantibacillus plantarum (strain ATCC BAA-793 / NCIMB 8826 / WCFS1) (Lactobacillus plantarum).